Reading from the N-terminus, the 92-residue chain is UPF0250 protein PD_0532 (92 aa).

It belongs to the UPF0250 family.

The polypeptide is UPF0250 protein PD_0532 (Xylella fastidiosa (strain Temecula1 / ATCC 700964)).